A 247-amino-acid chain; its full sequence is ABC-type transporter ATP-binding protein EcsA (247 aa).

Residues 4 to 234 enclose the ABC transporter domain; it reads LSVKDLTGGY…FGMKDAALDD (231 aa). 36-43 lines the ATP pocket; the sequence is GLNGAGKS.

This sequence belongs to the ABC transporter superfamily.

Its function is as follows. Has a role in exoprotein production, sporulation and competence. The chain is ABC-type transporter ATP-binding protein EcsA (ecsA) from Bacillus subtilis (strain 168).